The primary structure comprises 316 residues: Polyprenyl transferase ausN (316 aa).

9 helical membrane passes run 45 to 65 (VVGVAYTAAISPVTLPATFLL), 69 to 89 (VILSLWGFCIRSAGCAWNDLI), 108 to 128 (GAVSPSGAALLTAFMFGCGGS), 129 to 149 (LLLLLPSQCAFEAAIVVFFAL), 163 to 183 (LILTNIAWAIPMAMSSLDMNP), 188 to 208 (IPTLAMSFSIASVIVMIDIVY), 233 to 253 (DQIAYSLFFSGTLSLLAGGIL), 256 to 276 (LGIPFLIFSVGGHFVGFLRFL), and 296 to 316 (SCLLATVFLVFGLFFEYCVRL).

Belongs to the UbiA prenyltransferase family. Mg(2+) serves as cofactor.

The protein localises to the membrane. The enzyme catalyses 3,5-dimethylorsellinate + (2E,6E)-farnesyl diphosphate = (3R)-3-farnesyl-6-hydroxy-2,3,5-trimethyl-4-oxocyclohexa-1,5-diene-1-carboxylate + diphosphate + H(+). It functions in the pathway secondary metabolite biosynthesis; terpenoid biosynthesis. Its function is as follows. Polyprenyl transferase; part of the gene cluster A that mediates the biosynthesis of the fungal meroterpenoid acetoxydehydroaustin. The first step of the pathway is the synthesis of 3,5-dimethylorsellinic acid by the polyketide synthase ausA. 3,5-dimethylorsellinic acid is then prenylated by the polyprenyl transferase ausN. Further epoxidation by the FAD-dependent monooxygenase ausM and cyclization by the probable terpene cyclase ausL lead to the formation of protoaustinoid A. Protoaustinoid A is then oxidized to spiro-lactone preaustinoid A3 by the combined action of the FAD-binding monooxygenases ausB and ausC, and the dioxygenase ausE. Acid-catalyzed keto-rearrangement and ring contraction of the tetraketide portion of preaustinoid A3 by ausJ lead to the formation of preaustinoid A4. The aldo-keto reductase ausK, with the help of ausH, is involved in the next step by transforming preaustinoid A4 into isoaustinone which is in turn hydroxylated by the P450 monooxygenase ausI to form austinolide. The cytochrome P450 monooxygenase ausG then modifies austinolide to austinol. Austinol is further acetylated to austin by the O-acetyltransferase ausP, which spontaneously changes to dehydroaustin. The cytochrome P450 monooxygenase then converts dehydroaustin is into 7-dehydrodehydroaustin. The hydroxylation catalyzed by ausR permits the second O-acetyltransferase ausQ to add an additional acetyl group to the molecule, leading to the formation of acetoxydehydroaustin. Due to genetic rearrangements of the clusters and the subsequent loss of some enzymes, the end product of the Penicillium brasilianum austinoid biosynthesis clusters is acetoxydehydroaustin. The chain is Polyprenyl transferase ausN from Penicillium brasilianum.